Reading from the N-terminus, the 112-residue chain is Cytochrome c6 (112 aa).

The first 25 residues, 1 to 25 (MKTLLTILALTLVTLTTWLSTPAFA), serve as a signal peptide directing secretion. Positions 39, 42, 43, and 83 each coordinate heme c.

It belongs to the cytochrome c family. PetJ subfamily. As to quaternary structure, monomer. Post-translationally, binds 1 heme c group covalently per subunit.

It localises to the cellular thylakoid lumen. Its function is as follows. Functions as an electron carrier between membrane-bound cytochrome b6-f and photosystem I in oxygenic photosynthesis. In Synechococcus sp. (strain ATCC 27167 / PCC 6312), this protein is Cytochrome c6.